Reading from the N-terminus, the 336-residue chain is Biotin synthase (336 aa).

In terms of domain architecture, Radical SAM core spans Gln54–Arg281. [4Fe-4S] cluster-binding residues include Cys69, Cys73, and Cys76. [2Fe-2S] cluster contacts are provided by Cys113, Cys144, Cys204, and Arg276.

The protein belongs to the radical SAM superfamily. Biotin synthase family. In terms of assembly, homodimer. Requires [4Fe-4S] cluster as cofactor. [2Fe-2S] cluster serves as cofactor.

It catalyses the reaction (4R,5S)-dethiobiotin + (sulfur carrier)-SH + 2 reduced [2Fe-2S]-[ferredoxin] + 2 S-adenosyl-L-methionine = (sulfur carrier)-H + biotin + 2 5'-deoxyadenosine + 2 L-methionine + 2 oxidized [2Fe-2S]-[ferredoxin]. It participates in cofactor biosynthesis; biotin biosynthesis; biotin from 7,8-diaminononanoate: step 2/2. Its function is as follows. Catalyzes the conversion of dethiobiotin (DTB) to biotin by the insertion of a sulfur atom into dethiobiotin via a radical-based mechanism. This Actinobacillus pleuropneumoniae serotype 7 (strain AP76) protein is Biotin synthase.